We begin with the raw amino-acid sequence, 101 residues long: NADH-quinone oxidoreductase subunit K (101 aa).

3 helical membrane passes run 4–24, 30–50, and 61–81; these read LSHYLVLGALLFAIGVVGIFL, IILLMSIELMLLAVNMNFVAF, and IFVFFILTVAAAEAAIGLAIL.

It belongs to the complex I subunit 4L family. NDH-1 is composed of 14 different subunits. Subunits NuoA, H, J, K, L, M, N constitute the membrane sector of the complex.

The protein localises to the cell inner membrane. The enzyme catalyses a quinone + NADH + 5 H(+)(in) = a quinol + NAD(+) + 4 H(+)(out). In terms of biological role, NDH-1 shuttles electrons from NADH, via FMN and iron-sulfur (Fe-S) centers, to quinones in the respiratory chain. The immediate electron acceptor for the enzyme in this species is believed to be ubiquinone. Couples the redox reaction to proton translocation (for every two electrons transferred, four hydrogen ions are translocated across the cytoplasmic membrane), and thus conserves the redox energy in a proton gradient. This chain is NADH-quinone oxidoreductase subunit K, found in Nitrosomonas europaea (strain ATCC 19718 / CIP 103999 / KCTC 2705 / NBRC 14298).